A 76-amino-acid polypeptide reads, in one-letter code: Anaredoxin (76 aa).

Residues 24-66 enclose the HNH domain; it reads CMVCWEVNSKANGHHLIPYSEGGSADIQNMMTLCPSCHTKYHK.

This sequence belongs to the HNH nuclease family.

Functionally, putative P-450 reductase. The protein is Anaredoxin of Nostoc sp. (strain PCC 7120 / SAG 25.82 / UTEX 2576).